Here is a 591-residue protein sequence, read N- to C-terminus: Splicing factor U2af large subunit A (591 aa).

Residues Met-1–Gln-215 form a disordered region. Positions Ser-27–Ser-36 are enriched in polar residues. 2 stretches are compositionally biased toward basic and acidic residues: residues Ser-37–Arg-79 and Arg-157–Gly-191. RRM domains follow at residues Arg-272 to Asp-355 and Asp-392 to Gln-470.

This sequence belongs to the splicing factor SR family.

The protein localises to the nucleus. In terms of biological role, necessary for the splicing of pre-mRNA. In Triticum aestivum (Wheat), this protein is Splicing factor U2af large subunit A (U2AF65A).